A 230-amino-acid chain; its full sequence is Ribonuclease 3 (230 aa).

The 124-residue stretch at 10-133 (DPRLLSRIGY…IIGAIYLDSG (124 aa)) folds into the RNase III domain. Glu-46 serves as a coordination point for Mg(2+). Asp-50 is a catalytic residue. Asp-119 and Glu-122 together coordinate Mg(2+). Glu-122 is a catalytic residue. The 70-residue stretch at 161–230 (DPKSRLQEYL…AAEILKLLEQ (70 aa)) folds into the DRBM domain.

It belongs to the ribonuclease III family. In terms of assembly, homodimer. Mg(2+) serves as cofactor.

It is found in the cytoplasm. It carries out the reaction Endonucleolytic cleavage to 5'-phosphomonoester.. In terms of biological role, digests double-stranded RNA. Involved in the processing of primary rRNA transcript to yield the immediate precursors to the large and small rRNAs (23S and 16S). Processes some mRNAs, and tRNAs when they are encoded in the rRNA operon. Processes pre-crRNA and tracrRNA of type II CRISPR loci if present in the organism. This chain is Ribonuclease 3 (rnc), found in Acinetobacter pittii (strain PHEA-2).